Here is a 450-residue protein sequence, read N- to C-terminus: MSNLPSEPEFEQAYNELASTLENSTLFEKNPEYRTALKVVSIPERVIQFRVVWEDDKNQVQVNRGYRVQFNSALGPYKGGLRFHPTVNLSVLKFLGFEQIFKNALTGLNIGGGKGGADFDPKGKSDNEIRRFCVSFMRELSKHIGADTDVPAGDINVGGREIGFLFGAYKAIQNKWEGVLTGKGGSWGGSLIRPEATGYGLVYYVAHMIQYAGQGSFQGKRVAISGSGNVAQYAALKCIELGATVVSLSDSQGSLIAEGDAYFTPEDVGKIAELKLKRQSLTAFEHGGKYKYIEGSRPWTHVKVDVALPCATQNEVSKEEAESLVASGARYIAEGSNMGCTQEAIDVFEAERKEKKDKAIWYAPGKAANAGGVAVSGLEMAQNSARISWTQEEVDEKLKDIMKNAFETGLETPKKYVEAKDGEYPSLVAGSNIAGFVKVASAMHNHGDWW.

Residue lysine 114 is part of the active site.

The protein belongs to the Glu/Leu/Phe/Val dehydrogenases family. In terms of assembly, homohexamer.

It catalyses the reaction L-glutamate + NADP(+) + H2O = 2-oxoglutarate + NH4(+) + NADPH + H(+). The chain is NADP-specific glutamate dehydrogenase (gdhA) from Botryotinia fuckeliana (Noble rot fungus).